A 320-amino-acid chain; its full sequence is Malate dehydrogenase (320 aa).

NAD(+)-binding positions include 10–15 (GSGMIG) and Asp34. Positions 83 and 89 each coordinate substrate. Residues Asn96 and 119 to 121 (ITN) contribute to the NAD(+) site. Substrate contacts are provided by Asn121 and Arg152. His176 serves as the catalytic Proton acceptor.

The protein belongs to the LDH/MDH superfamily. MDH type 3 family.

The enzyme catalyses (S)-malate + NAD(+) = oxaloacetate + NADH + H(+). Functionally, catalyzes the reversible oxidation of malate to oxaloacetate. The protein is Malate dehydrogenase of Hyphomonas neptunium (strain ATCC 15444).